A 313-amino-acid chain; its full sequence is 4-diphosphocytidyl-2-C-methyl-D-erythritol kinase (313 aa).

Lys-10 is a catalytic residue. 95-105 (PVTAGLGGGSS) contributes to the ATP binding site. Residue Asp-136 is part of the active site. A disordered region spans residues 289-313 (HPRVSPWRSPRSASSRSTRRSSRPT). Residues 292 to 304 (VSPWRSPRSASSR) show a composition bias toward low complexity.

Belongs to the GHMP kinase family. IspE subfamily.

It catalyses the reaction 4-CDP-2-C-methyl-D-erythritol + ATP = 4-CDP-2-C-methyl-D-erythritol 2-phosphate + ADP + H(+). The protein operates within isoprenoid biosynthesis; isopentenyl diphosphate biosynthesis via DXP pathway; isopentenyl diphosphate from 1-deoxy-D-xylulose 5-phosphate: step 3/6. Its function is as follows. Catalyzes the phosphorylation of the position 2 hydroxy group of 4-diphosphocytidyl-2C-methyl-D-erythritol. This is 4-diphosphocytidyl-2-C-methyl-D-erythritol kinase from Anaeromyxobacter sp. (strain K).